A 185-amino-acid polypeptide reads, in one-letter code: uncharacterized protein (185 aa).

The next 2 membrane-spanning stretches (helical) occupy residues 1–19 (MLNIVLIIGLLAIFNTSSA) and 105–125 (AGFIAQCIIFLFVYTIVTMDV).

The protein resides in the membrane. This is an uncharacterized protein from Caenorhabditis elegans.